The sequence spans 393 residues: S-adenosylmethionine synthase (393 aa).

His16 contributes to the ATP binding site. Asp18 serves as a coordination point for Mg(2+). Glu44 contacts K(+). Positions 57 and 100 each coordinate L-methionine. Positions 100-110 (QSNDIAQGVDH) are flexible loop. Residues 167-169 (DAK), 238-239 (RF), Asp247, 253-254 (RK), Ala270, and Lys274 each bind ATP. Asp247 provides a ligand contact to L-methionine. Lys278 contributes to the L-methionine binding site.

The protein belongs to the AdoMet synthase family. In terms of assembly, homotetramer; dimer of dimers. Mg(2+) serves as cofactor. Requires K(+) as cofactor.

Its subcellular location is the cytoplasm. It carries out the reaction L-methionine + ATP + H2O = S-adenosyl-L-methionine + phosphate + diphosphate. The protein operates within amino-acid biosynthesis; S-adenosyl-L-methionine biosynthesis; S-adenosyl-L-methionine from L-methionine: step 1/1. Its function is as follows. Catalyzes the formation of S-adenosylmethionine (AdoMet) from methionine and ATP. The overall synthetic reaction is composed of two sequential steps, AdoMet formation and the subsequent tripolyphosphate hydrolysis which occurs prior to release of AdoMet from the enzyme. In Variovorax paradoxus (strain S110), this protein is S-adenosylmethionine synthase.